Consider the following 187-residue polypeptide: MGIDLIAGGKSKKTKRTAPKSDDVYLKLLVKLYRFLVRRSNSNFNAVILKRLFMSKVNKAPLSLSRLVEFMTGKDDKIAVLVGTITDDLRVHEIPAMKVTALRFTERARARIEKAGGECLTFDQLALRAPLGQNTVLLRGPKNSREAVKHFGPAPGVPHSNTKPYVRHKGRKFEKARGKRKSRGFKV.

Positions 150–187 (HFGPAPGVPHSNTKPYVRHKGRKFEKARGKRKSRGFKV) are disordered. Residues 165-187 (YVRHKGRKFEKARGKRKSRGFKV) show a composition bias toward basic residues.

The protein belongs to the eukaryotic ribosomal protein eL18 family.

The protein is Large ribosomal subunit protein eL18x (RPL18C) of Arabidopsis thaliana (Mouse-ear cress).